A 52-amino-acid chain; its full sequence is Large ribosomal subunit protein bL33A (52 aa).

The protein belongs to the bacterial ribosomal protein bL33 family.

This chain is Large ribosomal subunit protein bL33A, found in Staphylococcus aureus (strain USA300).